The chain runs to 357 residues: Ribonuclease 3 (357 aa).

Residues 6-155 enclose the RNase III domain; that stretch reads IKFIQDQIGY…ILGAIALDSN (150 aa). E45 contributes to the Mg(2+) binding site. The active site involves D49. 2 residues coordinate Mg(2+): D141 and E144. The active site involves E144. 2 consecutive DRBM domains span residues 198–267 and 285–355; these read PLHC…YLKD and DSIG…FVLE.

This sequence belongs to the ribonuclease III family. Homodimer. Mg(2+) serves as cofactor.

Its subcellular location is the cytoplasm. The catalysed reaction is Endonucleolytic cleavage to 5'-phosphomonoester.. Digests double-stranded RNA. Involved in the processing of primary rRNA transcript to yield the immediate precursors to the large and small rRNAs (23S and 16S). Processes some mRNAs, and tRNAs when they are encoded in the rRNA operon. Processes pre-crRNA and tracrRNA of type II CRISPR loci if present in the organism. The protein is Ribonuclease 3 (rnc) of Roseburia hominis (strain DSM 16839 / JCM 17582 / NCIMB 14029 / A2-183).